Here is a 201-residue protein sequence, read N- to C-terminus: Small ribosomal subunit protein uS4 (201 aa).

The S4 RNA-binding domain maps to 91 to 154 (TRLDNVVYRA…RKMEWFEEAQ (64 aa)).

The protein belongs to the universal ribosomal protein uS4 family. As to quaternary structure, part of the 30S ribosomal subunit. Contacts protein S5. The interaction surface between S4 and S5 is involved in control of translational fidelity.

One of the primary rRNA binding proteins, it binds directly to 16S rRNA where it nucleates assembly of the body of the 30S subunit. Functionally, with S5 and S12 plays an important role in translational accuracy. This chain is Small ribosomal subunit protein uS4, found in Corynebacterium ammoniagenes (Brevibacterium ammoniagenes).